We begin with the raw amino-acid sequence, 660 residues long: DNA ligase (660 aa).

NAD(+) is bound by residues 33-37, 82-83, and Glu-110; these read DFVYD and SL. The active-site N6-AMP-lysine intermediate is the Lys-112. NAD(+) is bound by residues Arg-133, Glu-167, Lys-281, and Lys-305. Zn(2+)-binding residues include Cys-396, Cys-399, Cys-412, and Cys-417. A BRCT domain is found at 583 to 660; the sequence is GENKLLAGKK…SFEDIKSYLD (78 aa).

Belongs to the NAD-dependent DNA ligase family. LigA subfamily. Mg(2+) serves as cofactor. The cofactor is Mn(2+).

The enzyme catalyses NAD(+) + (deoxyribonucleotide)n-3'-hydroxyl + 5'-phospho-(deoxyribonucleotide)m = (deoxyribonucleotide)n+m + AMP + beta-nicotinamide D-nucleotide.. Functionally, DNA ligase that catalyzes the formation of phosphodiester linkages between 5'-phosphoryl and 3'-hydroxyl groups in double-stranded DNA using NAD as a coenzyme and as the energy source for the reaction. It is essential for DNA replication and repair of damaged DNA. In Borreliella burgdorferi (strain ZS7) (Borrelia burgdorferi), this protein is DNA ligase.